The following is a 279-amino-acid chain: Thymidylate synthase (279 aa).

DUMP is bound at residue arginine 133 to arginine 134. The active-site Nucleophile is the cysteine 154. Residues arginine 178–aspartate 181, asparagine 189, and histidine 219–tyrosine 221 each bind dUMP. Aspartate 181 provides a ligand contact to (6R)-5,10-methylene-5,6,7,8-tetrahydrofolate. Position 278 (alanine 278) interacts with (6R)-5,10-methylene-5,6,7,8-tetrahydrofolate.

It belongs to the thymidylate synthase family. Bacterial-type ThyA subfamily. In terms of assembly, homodimer.

The protein localises to the cytoplasm. The enzyme catalyses dUMP + (6R)-5,10-methylene-5,6,7,8-tetrahydrofolate = 7,8-dihydrofolate + dTMP. It functions in the pathway pyrimidine metabolism; dTTP biosynthesis. Its function is as follows. Catalyzes the reductive methylation of 2'-deoxyuridine-5'-monophosphate (dUMP) to 2'-deoxythymidine-5'-monophosphate (dTMP) while utilizing 5,10-methylenetetrahydrofolate (mTHF) as the methyl donor and reductant in the reaction, yielding dihydrofolate (DHF) as a by-product. This enzymatic reaction provides an intracellular de novo source of dTMP, an essential precursor for DNA biosynthesis. The sequence is that of Thymidylate synthase from Streptococcus pneumoniae (strain 70585).